A 427-amino-acid polypeptide reads, in one-letter code: Glutamyl-tRNA reductase (427 aa).

Residues 49–52 (TCNR), Ser-101, 106–108 (EPQ), and Gln-112 contribute to the substrate site. Residue Cys-50 is the Nucleophile of the active site. NADP(+) is bound at residue 181–186 (GAGETI). The tract at residues 407–427 (FPATPGYRHPPVRPDDADPAP) is disordered. Positions 418–427 (VRPDDADPAP) are enriched in basic and acidic residues.

The protein belongs to the glutamyl-tRNA reductase family. Homodimer.

It carries out the reaction (S)-4-amino-5-oxopentanoate + tRNA(Glu) + NADP(+) = L-glutamyl-tRNA(Glu) + NADPH + H(+). The protein operates within porphyrin-containing compound metabolism; protoporphyrin-IX biosynthesis; 5-aminolevulinate from L-glutamyl-tRNA(Glu): step 1/2. Functionally, catalyzes the NADPH-dependent reduction of glutamyl-tRNA(Glu) to glutamate 1-semialdehyde (GSA). This chain is Glutamyl-tRNA reductase, found in Stenotrophomonas maltophilia (strain K279a).